We begin with the raw amino-acid sequence, 350 residues long: GDSL esterase/lipase At2g42990 (350 aa).

The first 24 residues, 1–24 (MATHYLSPSILCIILTTLVSIAGA), serve as a signal peptide directing secretion. Residue Ser-35 is the Nucleophile of the active site. N-linked (GlcNAc...) asparagine glycosylation is found at Asn-98, Asn-117, and Asn-141. Active-site residues include Asp-325 and His-328.

It belongs to the 'GDSL' lipolytic enzyme family.

Its subcellular location is the secreted. This Arabidopsis thaliana (Mouse-ear cress) protein is GDSL esterase/lipase At2g42990.